Reading from the N-terminus, the 524-residue chain is Cytochrome P450 1A1 (524 aa).

Residues 33-44 (TRTWVPKGLKSP) form a mitochondrial targeting signal region. A glycan (O-linked (GlcNAc) serine) is linked at Ser-71. Substrate is bound at residue Phe-228. Residue Cys-461 participates in heme binding.

It belongs to the cytochrome P450 family. In terms of assembly, both Cytochrome P450MT2A and Cytochrome P450MT2B interact with cytosolic chaperones HSP70 and HSP90; this interaction is required for initial targeting to mitochondria. P450MT2B interacts (via mitochondrial targeting signal) with TOMM40 (via N-terminus); this interaction is required for translocation across the mitochondrial outer membrane. The cofactor is heme. In terms of processing, two forms; MT2A (long form) and MT2B (short form); are produced by NH2-terminal proteolytic cleavage. This cleavage activates a cryptic mitochondrial targeting signal. Liver.

It is found in the cytoplasm. It localises to the endoplasmic reticulum membrane. The protein resides in the mitochondrion inner membrane. The protein localises to the microsome membrane. The catalysed reaction is an organic molecule + reduced [NADPH--hemoprotein reductase] + O2 = an alcohol + oxidized [NADPH--hemoprotein reductase] + H2O + H(+). It carries out the reaction estrone + reduced [NADPH--hemoprotein reductase] + O2 = 2-hydroxyestrone + oxidized [NADPH--hemoprotein reductase] + H2O + H(+). The enzyme catalyses estrone + reduced [NADPH--hemoprotein reductase] + O2 = 4-hydroxyestrone + oxidized [NADPH--hemoprotein reductase] + H2O + H(+). It catalyses the reaction estrone + reduced [NADPH--hemoprotein reductase] + O2 = 6alpha-hydroxyestrone + oxidized [NADPH--hemoprotein reductase] + H2O + H(+). The catalysed reaction is estrone + reduced [NADPH--hemoprotein reductase] + O2 = 15alpha-hydroxyestrone + oxidized [NADPH--hemoprotein reductase] + H2O + H(+). It carries out the reaction estrone + reduced [NADPH--hemoprotein reductase] + O2 = 16alpha-hydroxyestrone + oxidized [NADPH--hemoprotein reductase] + H2O + H(+). The enzyme catalyses 17beta-estradiol + reduced [NADPH--hemoprotein reductase] + O2 = 2-hydroxy-17beta-estradiol + oxidized [NADPH--hemoprotein reductase] + H2O + H(+). It catalyses the reaction 17beta-estradiol + reduced [NADPH--hemoprotein reductase] + O2 = 4-hydroxy-17beta-estradiol + oxidized [NADPH--hemoprotein reductase] + H2O + H(+). The catalysed reaction is 17beta-estradiol + reduced [NADPH--hemoprotein reductase] + O2 = 6alpha-hydroxy-17beta-estradiol + oxidized [NADPH--hemoprotein reductase] + H2O + H(+). It carries out the reaction 17beta-estradiol + reduced [NADPH--hemoprotein reductase] + O2 = 7alpha-hydroxy-17beta-estradiol + oxidized [NADPH--hemoprotein reductase] + H2O + H(+). The enzyme catalyses 17beta-estradiol + reduced [NADPH--hemoprotein reductase] + O2 = 15alpha-hydroxy-17beta-estradiol + oxidized [NADPH--hemoprotein reductase] + H2O + H(+). It catalyses the reaction (5Z,8Z,11Z)-eicosatrienoate + reduced [NADPH--hemoprotein reductase] + O2 = 19-hydroxy-(5Z,8Z,11Z)-eicosatrienoate + oxidized [NADPH--hemoprotein reductase] + H2O + H(+). The catalysed reaction is (5Z,8Z,11Z,14Z)-eicosatetraenoate + reduced [NADPH--hemoprotein reductase] + O2 = 16-hydroxy-(5Z,8Z,11Z,14Z)-eicosatetraenoate + oxidized [NADPH--hemoprotein reductase] + H2O + H(+). It carries out the reaction (5Z,8Z,11Z,14Z)-eicosatetraenoate + reduced [NADPH--hemoprotein reductase] + O2 = 17-hydroxy-(5Z,8Z,11Z,14Z)-eicosatetraenoate + oxidized [NADPH--hemoprotein reductase] + H2O + H(+). The enzyme catalyses (5Z,8Z,11Z,14Z)-eicosatetraenoate + reduced [NADPH--hemoprotein reductase] + O2 = 18-hydroxy-(5Z,8Z,11Z,14Z)-eicosatetraenoate + oxidized [NADPH--hemoprotein reductase] + H2O + H(+). It catalyses the reaction (5Z,8Z,11Z,14Z)-eicosatetraenoate + reduced [NADPH--hemoprotein reductase] + O2 = 19-hydroxy-(5Z,8Z,11Z,14Z)-eicosatetraenoate + oxidized [NADPH--hemoprotein reductase] + H2O + H(+). The catalysed reaction is (5Z,8Z,11Z,14Z,17Z)-eicosapentaenoate + reduced [NADPH--hemoprotein reductase] + O2 = 19-hydroxy-(5Z,8Z,11Z,14Z,17Z)-eicosapentaenoate + oxidized [NADPH--hemoprotein reductase] + H2O + H(+). It carries out the reaction (5Z,8Z,11Z,14Z)-eicosatetraenoate + reduced [NADPH--hemoprotein reductase] + O2 = (8R,9S)-epoxy-(5Z,11Z,14Z)-eicosatrienoate + oxidized [NADPH--hemoprotein reductase] + H2O + H(+). The enzyme catalyses (5Z,8Z,11Z,14Z)-eicosatetraenoate + reduced [NADPH--hemoprotein reductase] + O2 = (11R,12S)-epoxy-(5Z,8Z,14Z)-eicosatrienoate + oxidized [NADPH--hemoprotein reductase] + H2O + H(+). It catalyses the reaction (5Z,8Z,11Z,14Z)-eicosatetraenoate + reduced [NADPH--hemoprotein reductase] + O2 = (11S,12R)-epoxy-(5Z,8Z,14Z)-eicosatrienoate + oxidized [NADPH--hemoprotein reductase] + H2O + H(+). The catalysed reaction is (5Z,8Z,11Z,14Z)-eicosatetraenoate + reduced [NADPH--hemoprotein reductase] + O2 = (14R,15S)-epoxy-(5Z,8Z,11Z)-eicosatrienoate + oxidized [NADPH--hemoprotein reductase] + H2O + H(+). It carries out the reaction (5Z,8Z,11Z,14Z,17Z)-eicosapentaenoate + reduced [NADPH--hemoprotein reductase] + O2 = (17R,18S)-epoxy-(5Z,8Z,11Z,14Z)-eicosatetraenoate + oxidized [NADPH--hemoprotein reductase] + H2O + H(+). The enzyme catalyses (4Z,7Z,10Z,13Z,16Z,19Z)-docosahexaenoate + reduced [NADPH--hemoprotein reductase] + O2 = (19S,20R)-epoxy-(4Z,7Z,10Z,13Z,16Z)-docosapentaenoate + oxidized [NADPH--hemoprotein reductase] + H2O + H(+). It catalyses the reaction (4Z,7Z,10Z,13Z,16Z,19Z)-docosahexaenoate + reduced [NADPH--hemoprotein reductase] + O2 = (19R,20S)-epoxy-(4Z,7Z,10Z,13Z,16Z)-docosapentaenoate + oxidized [NADPH--hemoprotein reductase] + H2O + H(+). The catalysed reaction is all-trans-retinol + reduced [NADPH--hemoprotein reductase] + O2 = all-trans-retinal + oxidized [NADPH--hemoprotein reductase] + 2 H2O + H(+). It carries out the reaction all-trans-retinal + reduced [NADPH--hemoprotein reductase] + O2 = all-trans-retinoate + oxidized [NADPH--hemoprotein reductase] + H2O + 2 H(+). The enzyme catalyses (13S)-hydroperoxy-(9Z,11E)-octadecadienoate = 13-oxo-(9Z,11E)-octadecadienoate + H2O. It catalyses the reaction (12S)-hydroperoxy-(5Z,8Z,10E,14Z)-eicosatetraenoate = 12-oxo-(5Z,8Z,10E,14Z)-eicosatetraenoate + H2O. The catalysed reaction is (15S)-hydroperoxy-(5Z,8Z,11Z,13E)-eicosatetraenoate = 15-oxo-(5Z,8Z,11Z,13E)-eicosatetraenoate + H2O. It carries out the reaction (5S)-hydroperoxy-(6E,8Z,11Z,14Z)-eicosatetraenoate = 5-oxo-(6E,8Z,11Z,14Z)-eicosatetraenoate + H2O. Its pathway is steroid hormone biosynthesis. The protein operates within lipid metabolism; fatty acid metabolism. It functions in the pathway cofactor metabolism; retinol metabolism. A cytochrome P450 monooxygenase involved in the metabolism of various endogenous substrates, including fatty acids, steroid hormones and vitamins. Mechanistically, uses molecular oxygen inserting one oxygen atom into a substrate, and reducing the second into a water molecule, with two electrons provided by NADPH via cytochrome P450 reductase (CPR; NADPH-ferrihemoprotein reductase). Catalyzes the hydroxylation of carbon-hydrogen bonds. Exhibits high catalytic activity for the formation of hydroxyestrogens from estrone (E1) and 17beta-estradiol (E2), namely 2-hydroxy E1 and E2, as well as D-ring hydroxylated E1 and E2 at the C15alpha and C16alpha positions. Displays different regioselectivities for polyunsaturated fatty acids (PUFA) hydroxylation. Catalyzes the epoxidation of double bonds of certain PUFA. Converts arachidonic acid toward epoxyeicosatrienoic acid (EET) regioisomers, 8,9-, 11,12-, and 14,15-EET, that function as lipid mediators in the vascular system. Displays an absolute stereoselectivity in the epoxidation of eicosapentaenoic acid (EPA) producing the 17(R),18(S) enantiomer. May play an important role in all-trans retinoic acid biosynthesis in extrahepatic tissues. Catalyzes two successive oxidative transformation of all-trans retinol to all-trans retinal and then to the active form all-trans retinoic acid. May also participate in eicosanoids metabolism by converting hydroperoxide species into oxo metabolites (lipoxygenase-like reaction, NADPH-independent). In Rattus norvegicus (Rat), this protein is Cytochrome P450 1A1.